The chain runs to 2837 residues: Bifunctional DNA-directed RNA polymerase subunit beta-beta' (2837 aa).

The tract at residues 1 to 1433 is DNA-directed RNA polymerase subunit beta; it reads MVDSSYMYAS…CLNVDLKQND (1433 aa). The segment at 1436-2837 is DNA-directed RNA polymerase subunit beta'; sequence IEDISHTNIA…ESVVAYDQSN (1402 aa). C1501, C1503, C1516, and C1519 together coordinate Zn(2+). Positions 1893, 1895, and 1897 each coordinate Mg(2+). Positions 2235, 2309, 2316, and 2319 each coordinate Zn(2+).

This sequence in the N-terminal section; belongs to the RNA polymerase beta chain family. In the C-terminal section; belongs to the RNA polymerase beta' chain family. In terms of assembly, the RNAP catalytic core consists of 2 alpha, 1 beta/beta' and 1 omega subunit. When a sigma factor is associated with the core the holoenzyme is formed, which can initiate transcription. Mg(2+) is required as a cofactor. Requires Zn(2+) as cofactor.

The catalysed reaction is RNA(n) + a ribonucleoside 5'-triphosphate = RNA(n+1) + diphosphate. Functionally, DNA-dependent RNA polymerase catalyzes the transcription of DNA into RNA using the four ribonucleoside triphosphates as substrates. The polypeptide is Bifunctional DNA-directed RNA polymerase subunit beta-beta' (rpoBC) (Wolbachia pipientis wMel).